The chain runs to 334 residues: GTP 3',8-cyclase (334 aa).

Residues 11 to 235 enclose the Radical SAM core domain; sequence GFNRKVDYLR…VESAESSQGP (225 aa). R20 is a binding site for GTP. Positions 27 and 31 each coordinate [4Fe-4S] cluster. Y33 serves as a coordination point for S-adenosyl-L-methionine. C34 contacts [4Fe-4S] cluster. R69 is a binding site for GTP. S-adenosyl-L-methionine is bound at residue G73. T100 lines the GTP pocket. Residue S124 coordinates S-adenosyl-L-methionine. K161 is a binding site for GTP. M195 is a binding site for S-adenosyl-L-methionine. The [4Fe-4S] cluster site is built by C260 and C263. 265-267 contributes to the GTP binding site; that stretch reads RVR. C277 lines the [4Fe-4S] cluster pocket.

This sequence belongs to the radical SAM superfamily. MoaA family. Monomer and homodimer. The cofactor is [4Fe-4S] cluster.

The catalysed reaction is GTP + AH2 + S-adenosyl-L-methionine = (8S)-3',8-cyclo-7,8-dihydroguanosine 5'-triphosphate + 5'-deoxyadenosine + L-methionine + A + H(+). The protein operates within cofactor biosynthesis; molybdopterin biosynthesis. Functionally, catalyzes the cyclization of GTP to (8S)-3',8-cyclo-7,8-dihydroguanosine 5'-triphosphate. This chain is GTP 3',8-cyclase, found in Pseudomonas entomophila (strain L48).